The following is a 483-amino-acid chain: CBL-interacting serine/threonine-protein kinase 19 (483 aa).

The Protein kinase domain occupies 28-282 (YEMGRLLGHG…MPDIMETSWF (255 aa)). Residues 34–42 (LGHGTFAKV) and lysine 57 contribute to the ATP site. Catalysis depends on aspartate 150, which acts as the Proton acceptor. Residues 168-197 (DFGLSAVSDQIRQDGLFHTFCGTPAYVAPE) are activation loop. Position 172 is a phosphoserine (serine 172). Threonine 186 is subject to Phosphothreonine. Residues 313-322 (SVSGRSSTVS) are compositionally biased toward polar residues. Residues 313 to 338 (SVSGRSSTVSEPEDFESFDGRRRGGS) form a disordered region. The NAF domain occupies 340–364 (PRPASLNAFDLISFSPGFDLSGLFE). The PPI stretch occupies residues 367–396 (GEGSRFVSGAPVGQIISKLEEIARIVSFTV). A disordered region spans residues 459–483 (NLSSENGQRVSGSRSLPSFLLSDTD).

It belongs to the protein kinase superfamily. CAMK Ser/Thr protein kinase family. SNF1 subfamily. It depends on Mn(2+) as a cofactor.

The catalysed reaction is L-seryl-[protein] + ATP = O-phospho-L-seryl-[protein] + ADP + H(+). It carries out the reaction L-threonyl-[protein] + ATP = O-phospho-L-threonyl-[protein] + ADP + H(+). Its function is as follows. CIPK serine-threonine protein kinases interact with CBL proteins. Binding of a CBL protein to the regulatory NAF domain of CIPK protein lead to the activation of the kinase in a calcium-dependent manner. The chain is CBL-interacting serine/threonine-protein kinase 19 (CIPK19) from Arabidopsis thaliana (Mouse-ear cress).